The sequence spans 372 residues: MSLEPFKHSEALTFGVELELQLVNRHDYDLAPFAPDLLRALRGTQHAGDIKPEISPSMIEISTGICHDYAQALEELSVMRDLMVNASRGLNLGICGGGTHPFQVWSDRTISDSPRYQYISELYGYLAKQFTVFGQHVHIGCPSPDESLFLLHAIGRYVPHFIALAASSPYVQGVDTGFASARLNSVAAFPMSGRAPFVLTWDAFKAYFDKMRATGVIESMKDFYWDIRPKPEFGTIEVRVMDTPLTVQRACDIAAYIQALARYLLLSRPFMPQEDDYLVYTFNRFQACRFGLEGEYVHPNELTRMPIADHILSICDALEPHAEALGSLEALSNIRALAASRSNDAHWVRAANRDAHSLRDMVRQTCEQWGGG.

It belongs to the glutamate--cysteine ligase type 2 family. YbdK subfamily.

The enzyme catalyses L-cysteine + L-glutamate + ATP = gamma-L-glutamyl-L-cysteine + ADP + phosphate + H(+). Functionally, ATP-dependent carboxylate-amine ligase which exhibits weak glutamate--cysteine ligase activity. The chain is Putative glutamate--cysteine ligase 2 from Cupriavidus metallidurans (strain ATCC 43123 / DSM 2839 / NBRC 102507 / CH34) (Ralstonia metallidurans).